Here is a 347-residue protein sequence, read N- to C-terminus: MAEERHHTEHIPQWKKDEIENIKELIQSHKVFGMVGIEGILATKMQKIRRDLKDVAVLKVSRNTLTERALNQLGETIPGMKEYLDKQTALIFTNESPFKLYKLLEQTKTPSPIRGGAIAPADITVQKGPTSFPPGPILGELQSAGIPASIDAGKVAVKETKVVCKAGEVVPQKLATMLSKLEIYPLIVGLDLRAAYDDGTIYEPELLAVDESKYFSDIIRAAQNAFNLSVNTAFPTSATISTLLAKASSEAKNLGVNAVILEPGVMDTLLAKAHVQMTSVASEAADKDANAVDDDLREVLGAAASAAAAAAAAAPAEEEVKKEEEPEEEEEDHAEEDGMAGLGALFG.

The disordered stretch occupies residues 312-347 (AAAPAEEEVKKEEEPEEEEEDHAEEDGMAGLGALFG). A compositionally biased stretch (acidic residues) spans 325-338 (EPEEEEEDHAEEDG).

Belongs to the universal ribosomal protein uL10 family. As to quaternary structure, part of the 50S ribosomal subunit. Forms part of the ribosomal stalk which helps the ribosome interact with GTP-bound translation factors. Forms a heptameric L10(L12)2(L12)2(L12)2 complex, where L10 forms an elongated spine to which the L12 dimers bind in a sequential fashion.

In terms of biological role, forms part of the ribosomal stalk, playing a central role in the interaction of the ribosome with GTP-bound translation factors. This chain is Large ribosomal subunit protein uL10, found in Methanosarcina acetivorans (strain ATCC 35395 / DSM 2834 / JCM 12185 / C2A).